A 315-amino-acid chain; its full sequence is Ribosomal RNA small subunit methyltransferase H (315 aa).

S-adenosyl-L-methionine is bound by residues 35–37 (AGH), Asp55, Phe84, Asp105, and Gln112.

It belongs to the methyltransferase superfamily. RsmH family.

Its subcellular location is the cytoplasm. The catalysed reaction is cytidine(1402) in 16S rRNA + S-adenosyl-L-methionine = N(4)-methylcytidine(1402) in 16S rRNA + S-adenosyl-L-homocysteine + H(+). Its function is as follows. Specifically methylates the N4 position of cytidine in position 1402 (C1402) of 16S rRNA. The protein is Ribosomal RNA small subunit methyltransferase H of Streptococcus agalactiae serotype III (strain NEM316).